The chain runs to 346 residues: Protein RecA (346 aa).

ATP is bound at residue 67–74 (GPESSGKT).

It belongs to the RecA family.

Its subcellular location is the cytoplasm. Functionally, can catalyze the hydrolysis of ATP in the presence of single-stranded DNA, the ATP-dependent uptake of single-stranded DNA by duplex DNA, and the ATP-dependent hybridization of homologous single-stranded DNAs. It interacts with LexA causing its activation and leading to its autocatalytic cleavage. In Mycobacterium ulcerans (strain Agy99), this protein is Protein RecA.